The sequence spans 194 residues: Peptidyl-tRNA hydrolase (194 aa).

Tyrosine 17 provides a ligand contact to tRNA. Residue histidine 22 is the Proton acceptor of the active site. 3 residues coordinate tRNA: tyrosine 68, asparagine 70, and asparagine 116.

The protein belongs to the PTH family. In terms of assembly, monomer.

The protein localises to the cytoplasm. The catalysed reaction is an N-acyl-L-alpha-aminoacyl-tRNA + H2O = an N-acyl-L-amino acid + a tRNA + H(+). Functionally, hydrolyzes ribosome-free peptidyl-tRNAs (with 1 or more amino acids incorporated), which drop off the ribosome during protein synthesis, or as a result of ribosome stalling. In terms of biological role, catalyzes the release of premature peptidyl moieties from peptidyl-tRNA molecules trapped in stalled 50S ribosomal subunits, and thus maintains levels of free tRNAs and 50S ribosomes. This Pseudomonas savastanoi pv. phaseolicola (strain 1448A / Race 6) (Pseudomonas syringae pv. phaseolicola (strain 1448A / Race 6)) protein is Peptidyl-tRNA hydrolase.